The chain runs to 833 residues: Leucine--tRNA ligase (833 aa).

The short motif at 41-52 (PYPSGAGLHVGH) is the 'HIGH' region element. The short motif at 610–614 (KMSKS) is the 'KMSKS' region element. An ATP-binding site is contributed by K613.

This sequence belongs to the class-I aminoacyl-tRNA synthetase family.

The protein localises to the cytoplasm. The enzyme catalyses tRNA(Leu) + L-leucine + ATP = L-leucyl-tRNA(Leu) + AMP + diphosphate. This chain is Leucine--tRNA ligase, found in Streptococcus pneumoniae serotype 19F (strain G54).